Consider the following 112-residue polypeptide: Cell cycle protein GpsB (112 aa).

Residues 42–77 (YQKMADMNNEVVKLSEENNKLKKEVEELRLRVATSR) adopt a coiled-coil conformation. The interval 75-97 (TSRPSDNKSFSSNNSSSSNNNVD) is disordered. A compositionally biased stretch (low complexity) spans 81 to 95 (NKSFSSNNSSSSNNN).

This sequence belongs to the GpsB family. As to quaternary structure, forms polymers through the coiled coil domains. Interacts with PBP1, MreC and EzrA.

It is found in the cytoplasm. Functionally, divisome component that associates with the complex late in its assembly, after the Z-ring is formed, and is dependent on DivIC and PBP2B for its recruitment to the divisome. Together with EzrA, is a key component of the system that regulates PBP1 localization during cell cycle progression. Its main role could be the removal of PBP1 from the cell pole after pole maturation is completed. Also contributes to the recruitment of PBP1 to the division complex. Not essential for septum formation. The polypeptide is Cell cycle protein GpsB (Staphylococcus haemolyticus (strain JCSC1435)).